The following is a 382-amino-acid chain: Inactive ubiquitin-specific protease 5 (382 aa).

The 126-residue stretch at 16–141 (VPAEEERALI…GGPTLPRKAI (126 aa)) folds into the DUSP domain. The region spanning 323 to 382 (TGLLNLGNTCFMNSAIQCLVHTPEFARYFREDYHREINWQNPLGMVVSTLSTSMALKPYV) is the USP domain.

Belongs to the peptidase C19 family. As to expression, widely expressed with the highest expression in floral organs.

It localises to the cell membrane. Functionally, plays an important role in the development of floral organs and chloroplasts. Does not possess deubiquitinating enzyme activity in vitro. This is Inactive ubiquitin-specific protease 5 from Oryza sativa subsp. japonica (Rice).